We begin with the raw amino-acid sequence, 1146 residues long: Nitrogen permease regulator 3 (1146 aa).

The N-terminal stretch at 1 to 25 (MDECLPNSCLLGVHLVISTHSGPQI) is a signal peptide. S76 carries the phosphoserine modification. Disordered stretches follow at residues 90–159 (AITP…LSDS), 177–221 (SSLS…SPQM), 237–340 (SGTN…HHYH), and 440–466 (GRWR…ISRK). A compositionally biased stretch (polar residues) spans 105-123 (LPPTRSHANTVGSQSSIPA). 2 stretches are compositionally biased toward low complexity: residues 150–159 (ETSSSGLSDS) and 177–196 (SSLS…SSSP). Polar residues-rich tracts occupy residues 201 to 221 (LSRT…SPQM), 237 to 253 (SGTN…SQNF), and 277 to 303 (KPSQ…AFTG). Residues 304 to 315 (SCSISSKKSLSS) are compositionally biased toward low complexity. Over residues 323 to 334 (LRNSSLNDTPGQ) the composition is skewed to polar residues. Basic residues predominate over residues 441 to 455 (RWRKSKHKNKTRSKR). Phosphoserine is present on residues S486 and S987. A disordered region spans residues 979–1047 (KTNTARRPSM…SRVDDRDDNE (69 aa)). Composition is skewed to basic and acidic residues over residues 986–1004 (PSMD…DGQS) and 1025–1042 (NNKD…RVDD).

Belongs to the NPR3 family. Component of the SEA complex composed of at least IML1/SEA1, RTC1/SEA2, MTC5/SEA3, NPR2, NPR3, SEA4, SEC13 and SEH1. Forms a heterodimer with NPR2.

The protein localises to the vacuole membrane. Component of the SEA complex which coats the vacuolar membrane and is involved in intracellular trafficking, autophagy, response to nitrogen starvation, and amino acid biogenesis. Mediates inactivation of the TORC1 complex in response to amino acid starvation. Required for meiotic nuclear division. The sequence is that of Nitrogen permease regulator 3 (NPR3) from Saccharomyces cerevisiae (strain ATCC 204508 / S288c) (Baker's yeast).